A 318-amino-acid polypeptide reads, in one-letter code: Porphobilinogen deaminase (318 aa).

The residue at position 241 (C241) is an S-(dipyrrolylmethanemethyl)cysteine.

Belongs to the HMBS family. In terms of assembly, monomer. The cofactor is dipyrromethane.

It carries out the reaction 4 porphobilinogen + H2O = hydroxymethylbilane + 4 NH4(+). The protein operates within porphyrin-containing compound metabolism; protoporphyrin-IX biosynthesis; coproporphyrinogen-III from 5-aminolevulinate: step 2/4. In terms of biological role, tetrapolymerization of the monopyrrole PBG into the hydroxymethylbilane pre-uroporphyrinogen in several discrete steps. This Geotalea uraniireducens (strain Rf4) (Geobacter uraniireducens) protein is Porphobilinogen deaminase.